The following is a 144-amino-acid chain: Large ribosomal subunit protein uL11 (144 aa).

This sequence belongs to the universal ribosomal protein uL11 family. As to quaternary structure, part of the ribosomal stalk of the 50S ribosomal subunit. Interacts with L10 and the large rRNA to form the base of the stalk. L10 forms an elongated spine to which L12 dimers bind in a sequential fashion forming a multimeric L10(L12)X complex. One or more lysine residues are methylated.

Its function is as follows. Forms part of the ribosomal stalk which helps the ribosome interact with GTP-bound translation factors. The sequence is that of Large ribosomal subunit protein uL11 from Streptomyces coelicolor (strain ATCC BAA-471 / A3(2) / M145).